Here is a 216-residue protein sequence, read N- to C-terminus: uncharacterized protein (216 aa).

One can recognise a Cupin type-2 domain in the interval 125–176 (YPKSTNFDSHYHDCDEYWVIIEGAGTVVVGSRSFEVEVGDCVAIGMGHHHDL).

This is an uncharacterized protein from Sinorhizobium fredii (strain NBRC 101917 / NGR234).